The sequence spans 494 residues: Glucose-6-phosphate exchanger SLC37A2 (494 aa).

The helical transmembrane segment at 20–37 threads the bilayer; it reads YRFSILFLTFVFYTSYHL. N-linked (GlcNAc...) asparagine glycosylation is found at N52, N63, and N67. The next 11 membrane-spanning stretches (helical) occupy residues 85 to 105, 116 to 136, 146 to 166, 187 to 207, 208 to 228, 295 to 315, 327 to 347, 355 to 375, 384 to 404, 427 to 447, and 455 to 475; these read FGVL…FSGI, LSTG…GFYW, LVQA…VACV, SVGN…AWGL, SFIV…LFLV, LCLL…PLYI, GDLS…AGLV, ASTC…YNKI, VGML…ITTA, AIID…AGLI, and VFYM…RLVY.

Belongs to the major facilitator superfamily. Organophosphate:Pi antiporter (OPA) (TC 2.A.1.4) family.

The protein localises to the endoplasmic reticulum membrane. It carries out the reaction D-glucose 6-phosphate(in) + phosphate(out) = D-glucose 6-phosphate(out) + phosphate(in). In terms of biological role, inorganic phosphate and glucose-6-phosphate antiporter. May transport cytoplasmic glucose-6-phosphate into the lumen of the endoplasmic reticulum and translocate inorganic phosphate into the opposite direction. The sequence is that of Glucose-6-phosphate exchanger SLC37A2 from Danio rerio (Zebrafish).